A 798-amino-acid polypeptide reads, in one-letter code: MYSLILRERSGSITGSLWNRISSRNMGGGPRTFPGGLNKWQWKRMHEKKAREKENKLLDQEKQLYEARIRTEIRAKMWGNPDSGEKTAKSKQSHGPMSPKEHIKTLADRFMKAGAEDFWNENDGPVKKSDQGSRSGSDSIDSTSNSPIDVRRLVSATCDSMGKNRVFGSSRRGFSSMSRFKRNESSCDEGDDFDAKKLDTLSPFSPKFAGTKEKVKSSRSVVGVIRNKGLFGRRKFRKNDSSTEEDSDEEGDEGKMIGWMDMRKTGSSASLGNHDIKLTKRVNRNVTDEELYPPLDINTVREDLSKRKSVDNVMEEKQEPHDSIYSAKRFDESCISPLTLKALSASGILKMTRVQDATLSECLDGKDALVKAKTGTGKSMAFLLPAIETVLKAMNSGKGVNKVAPIFALILCPTRELASQIAAEGKALLKFHDGIGVQTLIGGTRFKLDQQRLESEPCQILIATPGRLLDHIENKSGLTSRLMALKLFIVDEADLLLDLGFRRDVEKIIDCLPRQRQSLLFSATIPKEVRRVSQLVLKRDHSYIDTIGLGCVETHDKVRQSCIVAPHESHFHLVPHLLKEHINNTPDYKIIVFCSTGMVTSLMYTLLREMKLNVREIHARKPQLHRTRVSDEFKESNRLILVTSDVSARGMNYPDVTLVIQVGIPSDREQYIHRLGRTGREGKGGEGLLLIAPWERYFLDELKDLPLEPIPAPDLDSIVKHQVDQSMAKIDTSIKEAAYHAWLGYYNSVRETGRDKTTLAELANRFCHSIGLEKPPALFRRTAVKMGLKGISGIPIRK.

3 disordered regions span residues 76–100, 117–148, and 236–257; these read KMWG…MSPK, DFWN…NSPI, and FRKN…GKMI. The span at 132–148 shows a compositional bias: low complexity; it reads GSRSGSDSIDSTSNSPI. Residues 242 to 252 show a composition bias toward acidic residues; sequence STEEDSDEEGD. Residues 328 to 356 carry the Q motif motif; sequence KRFDESCISPLTLKALSASGILKMTRVQD. Residues 359–543 enclose the Helicase ATP-binding domain; sequence LSECLDGKDA…QLVLKRDHSY (185 aa). 372–379 contributes to the ATP binding site; it reads AKTGTGKS. The DEAD box motif lies at 491-494; it reads DEAD. The Helicase C-terminal domain occupies 577-726; that stretch reads LLKEHINNTP…SIVKHQVDQS (150 aa).

The protein belongs to the DEAD box helicase family.

The enzyme catalyses ATP + H2O = ADP + phosphate + H(+). This is Probable DEAD-box ATP-dependent RNA helicase 48 (RH48) from Arabidopsis thaliana (Mouse-ear cress).